The following is a 1196-amino-acid chain: Sorbin and SH3 domain-containing protein 2 (1196 aa).

Disordered regions lie at residues 25–57 (VQSSPNLLAAGRESHSPDSAWRSYNGRNPETLN) and 75–95 (PNLQDKKSPTQSHITINGNSG). Phosphoserine is present on residues Ser-27, Ser-28, and Ser-40. Residues 83–92 (PTQSHITING) show a composition bias toward polar residues. Residues Ser-130 and Ser-143 each carry the phosphoserine modification. Position 148 is an alanine amide (Met-148). Positions 166–227 (VIKAPHYPGI…YNTPYTYNAG (62 aa)) constitute a SoHo domain. Residues 235–247 (AQSHPAAKTQTYR) are compositionally biased toward polar residues. 2 disordered regions span residues 235–314 (AQSH…EPGK) and 329–407 (SSID…GDDS). Composition is skewed to basic and acidic residues over residues 252 to 262 (SHSDNGTDAFK) and 276 to 312 (RPRDQSSTEKHDWDPPDRKVDTRKFRSEPRSIFEYEP). Ser-254 is modified (phosphoserine). Over residues 329–343 (SSIDRSLERPSSSAS) the composition is skewed to polar residues. Phosphoserine occurs at positions 334, 340, 343, and 354. Thr-372 is subject to Phosphothreonine. Residue Ser-382 is modified to Phosphoserine. A compositionally biased stretch (low complexity) spans 382 to 399 (SSSTFTTSFISSSPSSPS). Thr-387 carries the phosphothreonine modification. Phosphoserine is present on residues Ser-392, Ser-393, Ser-394, Ser-396, Ser-397, Ser-399, Ser-478, Ser-589, Ser-592, Ser-645, Ser-648, Ser-844, and Ser-938. The disordered stretch occupies residues 929–958 (QDHESPRSYSSTLTDLGRSVSRERRGTPEK). Basic and acidic residues predominate over residues 948–958 (VSRERRGTPEK). 2 SH3 domains span residues 959–1018 (EVKL…KLTP) and 1034–1095 (GEIG…VVKR). Ser-1113 and Ser-1119 each carry phosphoserine. One can recognise an SH3 3 domain in the interval 1137–1196 (GGGEPFQALYNYTPRNEDELELRESDVVDVMEKCDDGWFVGTSRRTKFFGTFPGNYVKRL).

In terms of assembly, interacts with ABL1/c-Abl, ABL2/v-Abl/Arg, ACTN, CBL and PALLD. Interacts with ABL, CBL, DNM1, DNM2, FLOT1, AFDN, PTK2B/PYK2, SAPAP, SPTAN1, SYNJ1, SYNJ2, VCL/vinculin and WASF. Interacts with PTPN12 and WASF1 via its SH3 domains; this interaction may mediate the partial PTPN12 and WASF1 translocation to focal adhesion sites. Post-translationally, ubiquitinated by CBL. As to expression, expressed in brain; found in synapses in cerebellum.

Its subcellular location is the cytoplasm. It localises to the perinuclear region. It is found in the apical cell membrane. The protein localises to the cell junction. The protein resides in the focal adhesion. Its subcellular location is the cell projection. It localises to the lamellipodium. Functionally, adapter protein that plays a role in the assembling of signaling complexes, being a link between ABL kinases and actin cytoskeleton. Can form complex with ABL1 and CBL, thus promoting ubiquitination and degradation of ABL1. May play a role in the regulation of pancreatic cell adhesion, possibly by acting on WASF1 phosphorylation, enhancing phosphorylation by ABL1, as well as dephosphorylation by PTPN12. Isoform 2 increases water and sodium absorption in the intestine and gall-bladder. This chain is Sorbin and SH3 domain-containing protein 2 (Sorbs2), found in Rattus norvegicus (Rat).